Here is a 406-residue protein sequence, read N- to C-terminus: Mitochondrial potassium channel (406 aa).

A mitochondrion-targeting transit peptide spans Met1–Thr35. At Leu36–Lys198 the chain is on the mitochondrial matrix side. Residues Val113–Glu140 adopt a coiled-coil conformation. Residues Asn199–Val219 form a helical membrane-spanning segment. Topologically, residues Asn220 to Val382 are mitochondrial intermembrane. Residues Ser383 to Phe403 form a helical membrane-spanning segment. Topologically, residues Lys404–Ser406 are mitochondrial matrix.

The mitochondrial potassium channel (mitoK(ATP)) is composed of 4 subunits of CCDC51/MITOK and 4 subunits of ABCB8/MITOSUR.

Its subcellular location is the mitochondrion inner membrane. The catalysed reaction is K(+)(in) = K(+)(out). Inhibited by ATP via mitoK(ATP) channel. Pore-forming subunit of the mitochondrial ATP-gated potassium channel (mitoK(ATP)). Together with ATP-binding subunit ABCB8/MITOSUR of the mitoK(ATP) channel, mediates ATP-dependent K(+) currents across the mitochondrial inner membrane. An increase in ATP intracellular levels closes the channel, inhibiting K(+) transport, whereas a decrease in ATP levels enhances K(+) uptake in the mitochondrial matrix. May contribute to the homeostatic control of cellular metabolism under stress conditions by regulating the mitochondrial matrix volume. The polypeptide is Mitochondrial potassium channel (Mus musculus (Mouse)).